Here is a 234-residue protein sequence, read N- to C-terminus: 1-(5-phosphoribosyl)-5-[(5-phosphoribosylamino)methylideneamino] imidazole-4-carboxamide isomerase (234 aa).

Residue Asp8 is the Proton acceptor of the active site. Residue Asp128 is the Proton donor of the active site.

Belongs to the HisA/HisF family.

It is found in the cytoplasm. The enzyme catalyses 1-(5-phospho-beta-D-ribosyl)-5-[(5-phospho-beta-D-ribosylamino)methylideneamino]imidazole-4-carboxamide = 5-[(5-phospho-1-deoxy-D-ribulos-1-ylimino)methylamino]-1-(5-phospho-beta-D-ribosyl)imidazole-4-carboxamide. It functions in the pathway amino-acid biosynthesis; L-histidine biosynthesis; L-histidine from 5-phospho-alpha-D-ribose 1-diphosphate: step 4/9. This is 1-(5-phosphoribosyl)-5-[(5-phosphoribosylamino)methylideneamino] imidazole-4-carboxamide isomerase from Cenarchaeum symbiosum (strain A).